The sequence spans 253 residues: Adenosylcobinamide-GDP ribazoletransferase (253 aa).

Helical transmembrane passes span 33–53 (ISPLIIGISLALIESAVYVLL), 106–126 (IGSGGIGLLLVYLSIQIVALL), 132–152 (FYTIFHLISSNVLSMTIGLYI), and 178–198 (VLLLELIPFISLYNIIVFLVF).

It belongs to the CobS family. Mg(2+) is required as a cofactor.

It is found in the cell membrane. It catalyses the reaction alpha-ribazole + adenosylcob(III)inamide-GDP = adenosylcob(III)alamin + GMP + H(+). The catalysed reaction is alpha-ribazole 5'-phosphate + adenosylcob(III)inamide-GDP = adenosylcob(III)alamin 5'-phosphate + GMP + H(+). The protein operates within cofactor biosynthesis; adenosylcobalamin biosynthesis; adenosylcobalamin from cob(II)yrinate a,c-diamide: step 7/7. Functionally, joins adenosylcobinamide-GDP and alpha-ribazole to generate adenosylcobalamin (Ado-cobalamin). Also synthesizes adenosylcobalamin 5'-phosphate from adenosylcobinamide-GDP and alpha-ribazole 5'-phosphate. This chain is Adenosylcobinamide-GDP ribazoletransferase, found in Saccharolobus islandicus (strain Y.G.57.14 / Yellowstone #1) (Sulfolobus islandicus).